Consider the following 121-residue polypeptide: Large ribosomal subunit protein bL20 (121 aa).

The protein belongs to the bacterial ribosomal protein bL20 family.

In terms of biological role, binds directly to 23S ribosomal RNA and is necessary for the in vitro assembly process of the 50S ribosomal subunit. It is not involved in the protein synthesizing functions of that subunit. In Chlamydia pneumoniae (Chlamydophila pneumoniae), this protein is Large ribosomal subunit protein bL20 (rplT).